Reading from the N-terminus, the 488-residue chain is Ribulose bisphosphate carboxylase large chain (488 aa).

Residues Asn127 and Thr177 each coordinate substrate. Lys179 functions as the Proton acceptor in the catalytic mechanism. Lys181 is a binding site for substrate. Lys205, Asp207, and Glu208 together coordinate Mg(2+). Residue Lys205 is modified to N6-carboxylysine. His297 serves as the catalytic Proton acceptor. 3 residues coordinate substrate: Arg298, His330, and Ser382.

This sequence belongs to the RuBisCO large chain family. Type I subfamily. In terms of assembly, heterohexadecamer of 8 large chains and 8 small chains. Requires Mg(2+) as cofactor.

It localises to the plastid. Its subcellular location is the chloroplast. It catalyses the reaction 2 (2R)-3-phosphoglycerate + 2 H(+) = D-ribulose 1,5-bisphosphate + CO2 + H2O. It carries out the reaction D-ribulose 1,5-bisphosphate + O2 = 2-phosphoglycolate + (2R)-3-phosphoglycerate + 2 H(+). Functionally, ruBisCO catalyzes two reactions: the carboxylation of D-ribulose 1,5-bisphosphate, the primary event in carbon dioxide fixation, as well as the oxidative fragmentation of the pentose substrate in the photorespiration process. Both reactions occur simultaneously and in competition at the same active site. In Chrysotila carterae (Marine alga), this protein is Ribulose bisphosphate carboxylase large chain.